The following is a 94-amino-acid chain: DASH complex subunit DAD5 (94 aa).

Residues 1–20 (MRRSTIVPTSRTSSSSPSPS) are compositionally biased toward low complexity. Residues 1 to 25 (MRRSTIVPTSRTSSSSPSPSQMKSF) are disordered.

The protein belongs to the DASH complex HSK3 family. In terms of assembly, component of the DASH complex consisting of ask1, dad1, dad2, dad3, dad4, dam1, duo1, dad5, spc19 and spc34, with a stoichiometry of one copy of each subunit per complex. Multiple DASH complexes oligomerize to form a ring that encircles spindle microtubules and organizes the rod-like NDC80 complexes of the outer kinetochore. DASH complex oligomerization strengthens microtubule attachments. On cytoplasmic microtubules, DASH complexes appear to form patches instead of rings.

The protein resides in the nucleus. The protein localises to the cytoplasm. Its subcellular location is the cytoskeleton. It is found in the spindle. It localises to the chromosome. The protein resides in the centromere. The protein localises to the kinetochore. In terms of biological role, component of the DASH complex that connects microtubules with kinetochores and couples microtubule depolymerisation to chromosome movement; it is involved in retrieving kinetochores to the spindle poles before their re-orientation on the spindle in early mitosis and allows microtubule depolymerization to pull chromosomes apart and resist detachment during anaphase. Kinetochores, consisting of a centromere-associated inner segment and a microtubule-contacting outer segment, play a crucial role in chromosome segregation by mediating the physical connection between centromeric DNA and microtubules. Kinetochores also serve as an input point for the spindle assembly checkpoint, which delays anaphase until all chromosomes have bioriented on the mitotic spindle. The DASH complex mediates bipolar kinetochore-microtubule attachments and facilitates the formation of additional interactions between outer kinetochore components and spindle microtubules. During chromosome movement along the microtubule, it is required both for the sliding of kinetochores along the lateral side of the microtubule and also for microtubule end-on pulling on the kinetochore. Modulates cytoplasmic microtubule dynamics by tracking the plus-end of shortening microtubules and slowing their depolymerization. This chain is DASH complex subunit DAD5, found in Schizosaccharomyces pombe (strain 972 / ATCC 24843) (Fission yeast).